Consider the following 399-residue polypeptide: Galactokinase (399 aa).

42-45 (EHTD) provides a ligand contact to substrate. ATP-binding positions include Ser76 and 133 to 139 (ASGLSSS). 2 residues coordinate Mg(2+): Ser139 and Glu171. The active-site Proton acceptor is the Asp183. Position 233 (Tyr233) interacts with substrate.

Belongs to the GHMP kinase family. GalK subfamily. Monomer.

It localises to the cytoplasm. It carries out the reaction alpha-D-galactose + ATP = alpha-D-galactose 1-phosphate + ADP + H(+). The protein operates within carbohydrate metabolism; galactose metabolism. Its function is as follows. Catalyzes the transfer of the gamma-phosphate of ATP to D-galactose to form alpha-D-galactose-1-phosphate (Gal-1-P). This is Galactokinase from Lactococcus lactis subsp. lactis (strain IL1403) (Streptococcus lactis).